The sequence spans 406 residues: Angiopoietin-related protein 4 (406 aa).

Positions 1 to 25 (MSGAPTAGAALMLCAATAVLLSAQG) are cleaved as a signal peptide. Positions 100–143 (EVLHSLQTQLKAQNSRIQQLFHKVAQQQRHLEKQHLRIQHLQSQ) form a coiled coil. Asparagine 177 carries an N-linked (GlcNAc...) asparagine glycan. Positions 179–401 (SRLHRLPRDC…ATTMLIQPMA (223 aa)) constitute a Fibrinogen C-terminal domain. 2 disulfide bridges follow: cysteine 188–cysteine 216 and cysteine 341–cysteine 354.

Homooligomer; disulfide-linked via Cys residues in the N-terminal part of the protein. The homooligomer undergoes proteolytic processing to release the ANGPTL4 C-terminal chain, which circulates as a monomer. The homooligomer unprocessed form is able to interact with the extracellular matrix. Post-translationally, N-glycosylated. In terms of processing, forms disulfide-linked dimers and tetramers. Cleaved into a smaller N-terminal chain and a larger chain that contains the fibrinogen C-terminal domain; both cleaved and uncleaved forms are detected in the extracellular space. The cleaved form is not present within the cell. As to expression, detected in blood plasma (at protein level). Detected in liver. Detected in white fat tissue and placenta. Expressed at high levels in the placenta, heart, liver, muscle, pancreas and lung but expressed poorly in the brain and kidney.

The protein resides in the secreted. Its subcellular location is the extracellular space. It is found in the extracellular matrix. In terms of biological role, mediates inactivation of the lipoprotein lipase LPL, and thereby plays a role in the regulation of triglyceride clearance from the blood serum and in lipid metabolism. May also play a role in regulating glucose homeostasis and insulin sensitivity. Inhibits proliferation, migration, and tubule formation of endothelial cells and reduces vascular leakage. Upon heterologous expression, inhibits the adhesion of endothelial cell to the extracellular matrix (ECM), and inhibits the reorganization of the actin cytoskeleton, formation of actin stress fibers and focal adhesions in endothelial cells that have adhered to ANGPTL4-containing ECM (in vitro). Depending on context, may modulate tumor-related angiogenesis. Its function is as follows. Mediates inactivation of the lipoprotein lipase LPL, and thereby plays an important role in the regulation of triglyceride clearance from the blood serum and in lipid metabolism. Has higher activity in LPL inactivation than the uncleaved protein. The protein is Angiopoietin-related protein 4 (ANGPTL4) of Homo sapiens (Human).